The following is an 883-amino-acid chain: EEF1AKMT4-ECE2 readthrough transcript protein (883 aa).

Residues 1–160 (MASPGAGRAP…VHTVDQVLSE (160 aa)) form a methyltransferase-like region region. At 1-178 (MASPGAGRAP…QLLGSRTQLE (178 aa)) the chain is on the cytoplasmic side. Positions 26 and 30 each coordinate S-adenosyl-L-methionine. Position 39 is a phosphotyrosine (Y39). Residues W41, G66, 88 to 89 (DY), 113 to 114 (DV), and K130 contribute to the S-adenosyl-L-methionine site. A helical membrane pass occupies residues 179–199 (LVLAGASLLLAALLLGCLVAL). The Lumenal segment spans residues 200-883 (GVQYHRDPSH…MNPGQLCEVW (684 aa)). One can recognise a Peptidase M13 domain in the interval 211–883 (TCLTEACIRV…MNPGQLCEVW (673 aa)). 5 disulfides stabilise this stretch: C212-C217, C235-C868, C243-C828, C299-C548, and C757-C880. N-linked (GlcNAc...) asparagine glycans are attached at residues N279, N283, N324, N384, N429, N496, and N652. H720 is a binding site for Zn(2+). E721 is a catalytic residue. H724 provides a ligand contact to Zn(2+). Residues N745 and N753 are each glycosylated (N-linked (GlcNAc...) asparagine). E780 is a Zn(2+) binding site. D784 functions as the Proton donor in the catalytic mechanism.

In the N-terminal section; belongs to the methyltransferase superfamily. This sequence in the C-terminal section; belongs to the peptidase M13 family. Zn(2+) serves as cofactor.

The protein resides in the golgi apparatus membrane. It is found in the cytoplasmic vesicle. Its subcellular location is the secretory vesicle membrane. It carries out the reaction Hydrolysis of the 21-Trp-|-Val-22 bond in big endothelin to form endothelin 1.. Its activity is regulated as follows. Inhibited by phosphoramidon. In terms of biological role, converts big endothelin-1 to endothelin-1. May also have methyltransferase activity. May play a role in amyloid-beta processing. This Homo sapiens (Human) protein is EEF1AKMT4-ECE2 readthrough transcript protein.